We begin with the raw amino-acid sequence, 88 residues long: UPF0367 protein AM1_1885 (88 aa).

This sequence belongs to the UPF0367 family.

The chain is UPF0367 protein AM1_1885 from Acaryochloris marina (strain MBIC 11017).